The chain runs to 267 residues: Glutamate racemase (267 aa).

Residues 10–11 and 42–43 each bind substrate; these read DS and YG. The Proton donor/acceptor role is filled by Cys73. 74–75 contributes to the substrate binding site; it reads NT. The active-site Proton donor/acceptor is Cys183. A substrate-binding site is contributed by 184–185; the sequence is TH.

The protein belongs to the aspartate/glutamate racemases family.

The enzyme catalyses L-glutamate = D-glutamate. It functions in the pathway cell wall biogenesis; peptidoglycan biosynthesis. Functionally, provides the (R)-glutamate required for cell wall biosynthesis. This Limosilactobacillus reuteri (strain DSM 20016) (Lactobacillus reuteri) protein is Glutamate racemase.